Reading from the N-terminus, the 556-residue chain is MEDSQMDTSSPTESSSEVNFTAEEDKSQETRSAAGVCYCGKERNLNIVELLCATCSRWVHETCVSYQLGKGKLLPFITNYVFVCKNCSASGLESFRKSQATISQMCHCAIANMQQAASRDGRRQIQFSKDKEIIPYIEQYWEAMTTMPRRLTQSWYSTVQRSLVKDVQTLFTYEEHAEHGAMYGLFHQDLRIIKPNYESMSKSGALRLTDDGYTQASLSKNNRQKRKFPGTDSGPTGKKGRPSSDITANVKLPPHGYPLEHPFNKDGYRYILAEPDPHAPFRQEFDESSDWAGKPIPGWLYRILVPHSVLLALHDRAPQLKISEDRLAVTGERGYCMVRATHSVNRGCWYFEVTIEEMPDGAATRLGWGREYGNLQAPLGYDKFGYSWRSRKGTKFTESHGKHYSDAYVEGDTLGFLIELPEEASLDYLPNTFKDRPLVKFKSHLYYEDKDKITETLKNLHILQGSRIEFFKNGQSQGVAFEDIYAGSYFPAISIHKSATVSVNFGPAFKYPEVLVEHKAKGMHDRVEELITEQCLADTLYLTEHDGRLRLDNMGL.

Residues 1-19 (MEDSQMDTSSPTESSSEVN) are compositionally biased toward polar residues. Positions 1–27 (MEDSQMDTSSPTESSSEVNFTAEEDKS) are disordered. The PHD-type zinc-finger motif lies at 34–90 (AGVCYCGKERNLNIVELLCATCSRWVHETCVSYQLGKGKLLPFITNYVFVCKNCSAS). Positions 37, 39, 52, 55, 60, 63, 84, and 87 each coordinate Zn(2+). The disordered stretch occupies residues 216–251 (ASLSKNNRQKRKFPGTDSGPTGKKGRPSSDITANVK). The region spanning 288-510 (SSDWAGKPIP…VSVNFGPAFK (223 aa)) is the B30.2/SPRY domain.

As to quaternary structure, core component of several methyltransferase-containing complexes. Component of the SET1C/COMPASS complex, composed at least of the catalytic subunit Set1, wds/WDR5, Wdr82, Rbbp5, ash2, Cfp1/CXXC1, hcf and Dpy-30L1. Component of the MLL3/4 (Histone-lysine N-methyltransferase/demethylase TRR) complex composed at least of the catalytic subunit trr, ash2, Rbbp5, Dpy-30L1, wds, hcf, ptip, Pa1, Utx, Lpt and Ncoa6. Interacts with hcf. Interacts with trr. In terms of assembly, interacts (via B30.2/SPRY domain) with sktl; the interaction is direct. In terms of tissue distribution, in larvae and pupae, expressed in imaginal disks, salivary gland and fat body cells. No expression detected in central nervous system (at protein level).

Its subcellular location is the nucleus. It localises to the chromosome. Functionally, transcriptional regulator. Regulates a number of genes involved in wing development including activation of net and bs and repression of rho and kni and controls vein-intervein patterning during wing development. Required for correct expression of a number of homeotic genes including Scr in the first leg imaginal disk and Ubx in the third leg imaginal disk and haltere disks. Required for stabilization of the histone-lysine N-methyltransferase trr and for trimethylation of 'Lys-4' of histone H3. Together with sktl probably plays a role in maintenance of transcriptionally active chromatin through down-regulation of histone H1 hyperphosphorylation. The protein is Set1/Ash2 histone methyltransferase complex subunit ASH2 of Drosophila melanogaster (Fruit fly).